Here is a 652-residue protein sequence, read N- to C-terminus: DNA ligase (652 aa).

NAD(+) contacts are provided by residues 29–33, 78–79, and E107; these read DSEYD and SL. Residue K109 is the N6-AMP-lysine intermediate of the active site. NAD(+)-binding residues include R130, E164, K278, and K302. Zn(2+)-binding residues include C395, C398, C413, and C418. The 76-residue stretch at 577 to 652 folds into the BRCT domain; sequence VADAALSGLT…VRDEAWLESL (76 aa).

Belongs to the NAD-dependent DNA ligase family. LigA subfamily. It depends on Mg(2+) as a cofactor. Requires Mn(2+) as cofactor.

The enzyme catalyses NAD(+) + (deoxyribonucleotide)n-3'-hydroxyl + 5'-phospho-(deoxyribonucleotide)m = (deoxyribonucleotide)n+m + AMP + beta-nicotinamide D-nucleotide.. Functionally, DNA ligase that catalyzes the formation of phosphodiester linkages between 5'-phosphoryl and 3'-hydroxyl groups in double-stranded DNA using NAD as a coenzyme and as the energy source for the reaction. It is essential for DNA replication and repair of damaged DNA. This Streptococcus pneumoniae (strain JJA) protein is DNA ligase.